A 159-amino-acid chain; its full sequence is Sec-independent protein translocase protein TatB (159 aa).

Residues 1 to 21 (MIDIGLSKMALIGAVALIVIG) form a helical membrane-spanning segment.

It belongs to the TatB family. As to quaternary structure, the Tat system comprises two distinct complexes: a TatABC complex, containing multiple copies of TatA, TatB and TatC subunits, and a separate TatA complex, containing only TatA subunits. Substrates initially bind to the TatABC complex, which probably triggers association of the separate TatA complex to form the active translocon.

It is found in the cell inner membrane. Part of the twin-arginine translocation (Tat) system that transports large folded proteins containing a characteristic twin-arginine motif in their signal peptide across membranes. Together with TatC, TatB is part of a receptor directly interacting with Tat signal peptides. TatB may form an oligomeric binding site that transiently accommodates folded Tat precursor proteins before their translocation. This is Sec-independent protein translocase protein TatB from Acidovorax sp. (strain JS42).